Here is a 622-residue protein sequence, read N- to C-terminus: Basic helix-loop-helix ARNT-like protein 2 (622 aa).

A compositionally biased stretch (low complexity) spans 1 to 10 (MAEAGVGSAE). Disordered stretches follow at residues 1-29 (MAEAGVGSAEGAEEERRAVEENFPVDGNS) and 41-86 (PITK…EDEE). Residues 45-54 (PATTSFNNSV) are compositionally biased toward polar residues. The segment covering 67 to 76 (DNQDTVEVDG) has biased composition (acidic residues). Positions 77 to 86 (DPQKRNEDEE) are enriched in basic and acidic residues. The region spanning 92–145 (DFREAHSQTEKRRRDKMNNLIEELSAMIPQCNPMARKLDKLTVLRMAVQHLKSL) is the bHLH domain. PAS domains lie at 163–235 (KDDE…DVSP) and 342–412 (VPQK…LQNK). One can recognise a PAC domain in the interval 417–460 (TNSYKFRAKDGSFITLKSQWFSFMNPWTKELEYIVSNNTVVLGH).

As to quaternary structure, component of the circadian core oscillator, which includes the CRY proteins, CLOCK, or NPAS2, BMAL1 or BMAL2, CSNK1D and/or CSNK1E, TIMELESS and the PER proteins. Interacts directly with CLOCK to form the BMAL2-CLOCK transactivator. Can form heterodimers or homodimers which interact directly with CLOCK to form the transcription activator. In terms of tissue distribution, expressed in the pineal gland.

The protein localises to the nucleus. In terms of biological role, transcriptional activator which forms a core component of the circadian clock. The circadian clock, an internal time-keeping system, regulates various physiological processes through the generation of approximately 24 hour circadian rhythms in gene expression, which are translated into rhythms in metabolism and behavior. It is derived from the Latin roots 'circa' (about) and 'diem' (day) and acts as an important regulator of a wide array of physiological functions including metabolism, sleep, body temperature, blood pressure, endocrine, immune, cardiovascular, and renal function. Consists of two major components: the central clock, residing in the suprachiasmatic nucleus (SCN) of the brain, and the peripheral clocks that are present in nearly every tissue and organ system. Both the central and peripheral clocks can be reset by environmental cues, also known as Zeitgebers (German for 'timegivers'). The predominant Zeitgeber for the central clock is light, which is sensed by retina and signals directly to the SCN. The central clock entrains the peripheral clocks through neuronal and hormonal signals, body temperature and feeding-related cues, aligning all clocks with the external light/dark cycle. Circadian rhythms allow an organism to achieve temporal homeostasis with its environment at the molecular level by regulating gene expression to create a peak of protein expression once every 24 hours to control when a particular physiological process is most active with respect to the solar day. Transcription and translation of core clock components (CLOCK, NPAS2, BMAL1, BMAL2, PER1, PER2, PER3, CRY1 and CRY2) plays a critical role in rhythm generation, whereas delays imposed by post-translational modifications (PTMs) are important for determining the period (tau) of the rhythms (tau refers to the period of a rhythm and is the length, in time, of one complete cycle). A diurnal rhythm is synchronized with the day/night cycle, while the ultradian and infradian rhythms have a period shorter and longer than 24 hours, respectively. Disruptions in the circadian rhythms contribute to the pathology of cardiovascular diseases, cancer, metabolic syndromes and aging. A transcription/translation feedback loop (TTFL) forms the core of the molecular circadian clock mechanism. Transcription factors, CLOCK or NPAS2 and BMAL1 or BMAL2, form the positive limb of the feedback loop, act in the form of a heterodimer and activate the transcription of core clock genes and clock-controlled genes (involved in key metabolic processes), harboring E-box elements (5'-CACGTG-3') within their promoters. The core clock genes: PER1/2/3 and CRY1/2 which are transcriptional repressors form the negative limb of the feedback loop and interact with the CLOCK|NPAS2-BMAL1|BMAL2 heterodimer inhibiting its activity and thereby negatively regulating their own expression. This heterodimer also activates nuclear receptors NR1D1/2 and RORA/B/G, which form a second feedback loop and which activate and repress BMAL1 transcription, respectively. The preferred binding motif for the CLOCK-BMAL1 heterodimer is 5'-CACGTGA-3', which contains a flanking adenine nucleotide at the 3-prime end of the canonical 6-nucleotide E-box sequence. CLOCK specifically binds to the half-site 5'-CAC-3', while BMAL1 binds to the half-site 5'-GTGA-3'. This is Basic helix-loop-helix ARNT-like protein 2 (BMAL2) from Gallus gallus (Chicken).